The following is a 295-amino-acid chain: Cytidine deaminase (295 aa).

CMP/dCMP-type deaminase domains lie at 48–168 and 187–295; these read TDSE…FGPA and KETD…YVAA. 89-91 contributes to the substrate binding site; it reads NME. Zn(2+) is bound at residue H102. The Proton donor role is filled by E104. Positions 129 and 132 each coordinate Zn(2+).

This sequence belongs to the cytidine and deoxycytidylate deaminase family. As to quaternary structure, homodimer. The cofactor is Zn(2+).

It carries out the reaction cytidine + H2O + H(+) = uridine + NH4(+). The catalysed reaction is 2'-deoxycytidine + H2O + H(+) = 2'-deoxyuridine + NH4(+). In terms of biological role, this enzyme scavenges exogenous and endogenous cytidine and 2'-deoxycytidine for UMP synthesis. This chain is Cytidine deaminase, found in Photobacterium profundum (strain SS9).